Reading from the N-terminus, the 455-residue chain is Kynurenine 3-monooxygenase (455 aa).

The protein belongs to the aromatic-ring hydroxylase family. KMO subfamily. FAD serves as cofactor.

It carries out the reaction L-kynurenine + NADPH + O2 + H(+) = 3-hydroxy-L-kynurenine + NADP(+) + H2O. The protein operates within cofactor biosynthesis; NAD(+) biosynthesis; quinolinate from L-kynurenine: step 1/3. In terms of biological role, catalyzes the hydroxylation of L-kynurenine (L-Kyn) to form 3-hydroxy-L-kynurenine (L-3OHKyn). Required for synthesis of quinolinic acid. This Xanthomonas axonopodis pv. citri (strain 306) protein is Kynurenine 3-monooxygenase.